The sequence spans 266 residues: Type 1 encapsulin shell protein (266 aa).

Belongs to the encapsulin family. Family 1 subfamily. As to quaternary structure, this encapsulin nanocompartment is formed by 60 subunits; monomers form 12 pentamers which assemble to form shells. Shells are loaded with 4 encapsulated ferritin-like protein decamers (EncFtn) in a tetrahedral arrangement. A 3 nm gap is consistently seen between the shell and the cargo.

The protein resides in the encapsulin nanocompartment. In terms of biological role, shell component of a type 1 encapsulin nanocompartment. Assembles into proteinaceous shells about 21 nm in diameter. Small pores form at, or close to, the 2-, 3-, and 5-fold symmetry axes. Data analysis suggests the 5-fold pores open and close with maximal and minimal aperatures of 15 and 5 Angstroms. Cargo protein Fer (ferritin-like protein, probably stores iron) is targeted to the interior via its C-terminal extension; empty intact shells can be isolated in the absence of cargo protein. The chain is Type 1 encapsulin shell protein from Haliangium ochraceum (strain DSM 14365 / JCM 11303 / SMP-2).